The chain runs to 1114 residues: Filamentous growth regulator 23 (1114 aa).

A signal peptide spans 1–21 (MFASYLLLVLWIIRLVPTTHA). Disordered regions lie at residues 232-256 (GSET…PSTT) and 284-314 (SSSI…TSSS). A compositionally biased stretch (pro residues) spans 240–252 (TTAPKPVETPSPE). N-linked (GlcNAc...) asparagine glycosylation is found at Asn382, Asn397, Asn475, Asn490, Asn506, Asn539, Asn565, Asn591, Asn637, Asn687, and Asn739. Positions 392–430 (SETTTNESSSYTDEPSSSEEITNTYEPSSSTESSTTDQF) are disordered. Positions 764–784 (TSTLTSSHTSDNEKPASLSSS) are disordered. The N-linked (GlcNAc...) asparagine glycan is linked to Asn831. Composition is skewed to low complexity over residues 844 to 910 (SASS…SSSS) and 922 to 941 (SSSV…ESSS). The interval 844 to 963 (SASSSYHSSE…ANENTSEITT (120 aa)) is disordered. The segment covering 942–963 (NGLVSTVTESSTANENTSEITT) has biased composition (polar residues). 3 N-linked (GlcNAc...) asparagine glycosylation sites follow: Asn957, Asn966, and Asn1070. The GPI-anchor amidated asparagine moiety is linked to residue Asn1089. Positions 1090–1114 (ANSLGLKNGDNSWIIGIMMIGLLMI) are cleaved as a propeptide — removed in mature form.

The protein localises to the cell membrane. Its function is as follows. Putative adhesin which may be involved in cell adhesion and virulence. Involved in the regulation of filamentous growth. The sequence is that of Filamentous growth regulator 23 (FGR23) from Candida albicans (strain SC5314 / ATCC MYA-2876) (Yeast).